Consider the following 77-residue polypeptide: Translation initiation factor IF-1, chloroplastic (77 aa).

An S1-like domain is found at 1–71; it reads MKEQKWIHEG…TRGRIIYRLR (71 aa).

The protein belongs to the IF-1 family. In terms of assembly, component of the 30S ribosomal translation pre-initiation complex which assembles on the 30S ribosome in the order IF-2 and IF-3, IF-1 and N-formylmethionyl-tRNA(fMet); mRNA recruitment can occur at any time during PIC assembly.

Its subcellular location is the plastid. The protein localises to the chloroplast. Its function is as follows. One of the essential components for the initiation of protein synthesis. Stabilizes the binding of IF-2 and IF-3 on the 30S subunit to which N-formylmethionyl-tRNA(fMet) subsequently binds. Helps modulate mRNA selection, yielding the 30S pre-initiation complex (PIC). Upon addition of the 50S ribosomal subunit IF-1, IF-2 and IF-3 are released leaving the mature 70S translation initiation complex. The chain is Translation initiation factor IF-1, chloroplastic from Antirrhinum majus (Garden snapdragon).